We begin with the raw amino-acid sequence, 445 residues long: Phosphoglucosamine mutase (445 aa).

S101 (phosphoserine intermediate) is an active-site residue. Mg(2+) contacts are provided by S101, D240, D242, and D244. S101 is subject to Phosphoserine.

Belongs to the phosphohexose mutase family. Requires Mg(2+) as cofactor. Activated by phosphorylation.

It carries out the reaction alpha-D-glucosamine 1-phosphate = D-glucosamine 6-phosphate. In terms of biological role, catalyzes the conversion of glucosamine-6-phosphate to glucosamine-1-phosphate. The protein is Phosphoglucosamine mutase of Azotobacter vinelandii (strain DJ / ATCC BAA-1303).